A 456-amino-acid polypeptide reads, in one-letter code: Argininosuccinate lyase (456 aa).

The protein belongs to the lyase 1 family. Argininosuccinate lyase subfamily.

It is found in the cytoplasm. It carries out the reaction 2-(N(omega)-L-arginino)succinate = fumarate + L-arginine. The protein operates within amino-acid biosynthesis; L-arginine biosynthesis; L-arginine from L-ornithine and carbamoyl phosphate: step 3/3. This Listeria monocytogenes serovar 1/2a (strain ATCC BAA-679 / EGD-e) protein is Argininosuccinate lyase.